We begin with the raw amino-acid sequence, 80 residues long: UPF0154 protein SZO_03240 (80 aa).

The chain crosses the membrane as a helical span at residues 4 to 24 (AIWILLIIVALTAGLFGGIFI).

This sequence belongs to the UPF0154 family.

It localises to the cell membrane. The protein is UPF0154 protein SZO_03240 of Streptococcus equi subsp. zooepidemicus (strain H70).